The sequence spans 79 residues: Protein OPG081 (79 aa).

At 1–8 (MVDAITVL) the chain is on the intravirion side. Residues 9 to 29 (TAIGITVLMLLMVISGAAMIV) traverse the membrane as a helical segment. At 30-47 (KELNPNDIFTMQSLKFNR) the chain is on the virion surface side. Residues 48 to 68 (AVTIFKYIGLFIYIPGTIILY) traverse the membrane as a helical segment. Residues 69 to 79 (ATYVKSLLMKS) lie on the Intravirion side of the membrane.

The protein belongs to the orthopoxvirus OPG081 family.

The protein resides in the virion membrane. Its function is as follows. Envelope protein. In Vaccinia virus (strain Copenhagen) (VACV), this protein is Protein OPG081 (OPG081).